We begin with the raw amino-acid sequence, 395 residues long: Phosphoglycerate kinase (395 aa).

Substrate-binding positions include aspartate 20 to asparagine 22, arginine 35, histidine 58 to arginine 61, arginine 117, and arginine 150. Residues lysine 200, glutamate 322, and glycine 352 to threonine 355 contribute to the ATP site.

The protein belongs to the phosphoglycerate kinase family. As to quaternary structure, monomer.

It localises to the cytoplasm. The catalysed reaction is (2R)-3-phosphoglycerate + ATP = (2R)-3-phospho-glyceroyl phosphate + ADP. It participates in carbohydrate degradation; glycolysis; pyruvate from D-glyceraldehyde 3-phosphate: step 2/5. This is Phosphoglycerate kinase from Brucella suis biovar 1 (strain 1330).